The chain runs to 2690 residues: Non-reducing polyketide synthase pigA (2690 aa).

A Starter acyltransferase (SAT) domain is found at 96-211 (NILLSPLVVI…AELSRVLQDF (116 aa)). Catalysis depends on C140, which acts as the Nucleophile; for transacylase activity. Residue H258 is the Proton donor/acceptor; for transacylase activity of the active site. A Ketosynthase family 3 (KS3) domain is found at 388 to 804 (ENDIAVIGMS…GSNASLIVTQ (417 aa)). Residues C553, H688, and H727 each act as for beta-ketoacyl synthase activity in the active site. In terms of domain architecture, Malonyl-CoA:ACP transacylase (MAT) spans 915–1182 (FGGQISTFVG…VQRLAKQHPS (268 aa)). Residues 1296-1426 (LTFVGYQDKD…GKVFFRSVDD (131 aa)) form an N-terminal hotdog fold region. One can recognise a PKS/mFAS DH domain in the interval 1296-1602 (LTFVGYQDKD…YAKVPKMSMS (307 aa)). The product template (PT) domain stretch occupies residues 1323–1600 (LVSGHLIAQT…INYAKVPKMS (278 aa)). The active-site Proton acceptor; for dehydratase activity is H1327. Residues 1454 to 1602 (ADDIIQGRNI…YAKVPKMSMS (149 aa)) are C-terminal hotdog fold. D1510 serves as the catalytic Proton donor; for dehydratase activity. A Carrier 1 domain is found at 1657–1731 (PDISGKVRAM…GLLRCIQEAL (75 aa)). S1691 bears the O-(pantetheine 4'-phosphoryl)serine mark. The disordered stretch occupies residues 1731-1764 (LGPSEGVEEETDNEEGEDGESSENPSVFTPSDAA). A compositionally biased stretch (acidic residues) spans 1736 to 1751 (GVEEETDNEEGEDGES). The span at 1755 to 1764 (PSVFTPSDAA) shows a compositional bias: polar residues. In terms of domain architecture, Carrier 2 spans 1768–1842 (SSAKADVAEF…EFDVKVNGKS (75 aa)). S1802 carries the O-(pantetheine 4'-phosphoryl)serine modification. Positions 1948–2255 (QTLERIKYLP…EVNIQRIFLA (308 aa)) are methyltransferase domain. Residues 2320 to 2564 (VTGATGSLGS…LSWTPVNDVA (245 aa)) form the Thioester reductase (TE) domain.

The cofactor is pantetheine 4'-phosphate.

The protein operates within secondary metabolite biosynthesis. Functionally, non-reducing polyketide synthase; part of the gene cluster that mediates the biosynthesis of azaphilone pigments (MonAzPs), a complex mixture of compounds with a common azaphilone skeleton very widely used as food colorants. PigA catalyzes the first step of MonAzPs biosynthesis and forms the hexaketide precursor from successive condensations of five malonyl-CoA units, with a simple acetyl-CoA starter unit. The starter acyl transferase (SAT) domain of pigA selects an acetyl-CoA starter unit, and the ketoacyl synthase (KS)-acyl transferase (AT)-acyl carrier protein (ACP) domains extend this starter unit five times with malonyl-CoA in five successive decarboxylative Claisen condensation cycles. The methyltransferase (MT) domain conducts a single C-methylation at C-4, most likely at the pentaketide stage. The reactive hexaketide chain then undergoes a product template (PT) domain-mediated C-2 to C-7 aldol cyclization to afford the first aromatic ring, followed by reductive release of the first pathway intermediate by the NADPH-dependent reductive release (R) domain. The role of esterase pigG is not clear, but it may play at most a supplementary role in the formation of the benzaldehyde produced by the pigA nrPKS. This very reactive benzaldehyde is intercepted by the pigC ketoreductase that to provide the first stable enzyme-free MonAzPs intermediate, 6-(4-hydroxy-2-oxopentyl)-3-methyl-2,4-dioxocyclohexane carbaldehyde, also known as M7PKS-1. The FAD-dependent monooxygenase pigN hydroxylates M7PKS-1 at C-4, which triggers the formation of the pyran ring. PigJ, pigK and pigD are involved in the acetylation of the pyran ring. PigJ and pigK form the two subunits of a dedicated fungal FAS that produces the side chain fatty acyl moiety of MonAzPs and pigD transfers the fatty acyl chain to the C-4 alcohol. PigM and pigO are involved in the elimination of the omega-1 alcohol. PigM acts as an O-acetyltransferase that synthesizes the putative O-11 acetyl intermediate whereas pigO eliminates acetic acid to yield an intermediate with a C10(11) double bond. The dehydration of the C-11 alcohol followed by the reduction of the C6(7) double bond by the NAD(P)H-dependent oxidoreductase pigE increases the electrophilicity of the C-5 ketone of the resulting acyl benzopyran. This in turn sets up the C-5 ketone for an intramolecular Knoevenagel aldol condensation with the C-20 enol of the side chain. This condensation affords the characteristic linear tricyclic carbon skeletons of the yellow pigments that serve as the common precursors for the classical yellow pigments monascin and ankaflavin, orange pigments rubopunctatin and monascorubrin, and red pigments ribropunctamine and monascorubramine. The FAD-dependent oxidoreductase pigF is especially invoved in the biosynthesis of orange and red pigments via desaturation of C6(7). The protein is Non-reducing polyketide synthase pigA of Monascus ruber (Mold).